A 307-amino-acid polypeptide reads, in one-letter code: 4-hydroxythreonine-4-phosphate dehydrogenase (307 aa).

Substrate contacts are provided by His-126 and Thr-127. Residues His-156, His-195, and His-251 each contribute to the a divalent metal cation site. Residues Lys-259, Asn-268, and Arg-277 each coordinate substrate.

Belongs to the PdxA family. In terms of assembly, homodimer. Requires Zn(2+) as cofactor. The cofactor is Mg(2+). Co(2+) serves as cofactor.

It is found in the cytoplasm. It carries out the reaction 4-(phosphooxy)-L-threonine + NAD(+) = 3-amino-2-oxopropyl phosphate + CO2 + NADH. It participates in cofactor biosynthesis; pyridoxine 5'-phosphate biosynthesis; pyridoxine 5'-phosphate from D-erythrose 4-phosphate: step 4/5. Functionally, catalyzes the NAD(P)-dependent oxidation of 4-(phosphooxy)-L-threonine (HTP) into 2-amino-3-oxo-4-(phosphooxy)butyric acid which spontaneously decarboxylates to form 3-amino-2-oxopropyl phosphate (AHAP). The protein is 4-hydroxythreonine-4-phosphate dehydrogenase of Helicobacter pylori (strain Shi470).